The primary structure comprises 897 residues: Probable basic-leucine zipper transcription factor R (897 aa).

2 disordered regions span residues 38–88 (DDNI…NIET) and 128–198 (YQQR…NSNS). Residues 44–75 (NNNNNNNNNNNNNNNNNNNNNNNNNNNNNNNN) show a composition bias toward low complexity. A compositionally biased stretch (polar residues) spans 76 to 88 (IGSPQIMNENIET). A coiled-coil region spans residues 94–137 (QYLERLQSIQQQQHQCQTQIQQQLQNYQQQYEDQYQQRQQQYQD). Over residues 128–140 (YQQRQQQYQDQYQ) the composition is skewed to low complexity. Over residues 141 to 157 (KPYSSPPLNFNSIPPIT) the composition is skewed to polar residues. A compositionally biased stretch (low complexity) spans 158-198 (NNNNNNNNNNNNNNNNNNSNSNSNSNSNSNSNSNSNSNSNS). 2 coiled-coil regions span residues 228–258 (LQQQ…QQQQ) and 330–407 (QQLQ…QQQQ). The segment at 461-516 (LQLPTPFYSPQQQQQQHTPISSFIPPPSLPSSPPSPPSPPSPPPQQQQQQQQQQQQ) is disordered. Over residues 484–505 (IPPPSLPSSPPSPPSPPSPPPQ) the composition is skewed to pro residues. The span at 506 to 516 (QQQQQQQQQQQ) shows a compositional bias: low complexity. The bZIP domain maps to 557–620 (ESKESIKKYN…SIEMMRMEPE (64 aa)). Residues 559-564 (KESIKK) are basic motif. The segment at 569-576 (IASRNYRL) is leucine-zipper.

This sequence belongs to the bZIP family.

Its subcellular location is the nucleus. Functionally, probable transcriptional regulator. In Dictyostelium discoideum (Social amoeba), this protein is Probable basic-leucine zipper transcription factor R (bzpR).